Reading from the N-terminus, the 455-residue chain is Lysine histidine transporter-like 4 (455 aa).

Over 1–38 the chain is Cytoplasmic; that stretch reads MAGIPDHIQDQHLVEEDQPFDLEDWLPITASRNANWYY. A helical membrane pass occupies residues 39-59; it reads SAFHNVTAIVGAGVLGLPYAM. The Extracellular portion of the chain corresponds to 60–61; that stretch reads SE. Residues 62 to 82 form a helical membrane-spanning segment; sequence LGWGPGVVVLILSWVITLYTL. At 83 to 113 the chain is on the cytoplasmic side; sequence WQMIEMHEMFEGQRFDRYHELGQAAFGKKLG. Residues 114–134 form a helical membrane-spanning segment; that stretch reads LYIIVPLQLLVEISVCIVYMV. The Extracellular portion of the chain corresponds to 135 to 158; the sequence is TGGKSLKNVHDLALGDGDKCTKLR. The chain crosses the membrane as a helical span at residues 159 to 179; sequence IQHFILIFASSQFVLSLLKNF. The Cytoplasmic portion of the chain corresponds to 180 to 181; that stretch reads NS. A helical transmembrane segment spans residues 182–202; it reads ISGVSLVAAVMSVSYSTIAWV. At 203-226 the chain is on the extracellular side; the sequence is ASLRKGATTGSVEYGYRKRTTSVP. The chain crosses the membrane as a helical span at residues 227–247; the sequence is LAFLSALGEMAFAYAGHNVVL. Residues 248-267 lie on the Cytoplasmic side of the membrane; it reads EIQATIPSTPENPSKRPMWK. Residues 268–288 traverse the membrane as a helical segment; the sequence is GAVVAYIIVAFCYFPVALVGF. Topologically, residues 289 to 307 are extracellular; it reads KTFGNSVEESILESLTKPT. A helical membrane pass occupies residues 308–328; sequence ALVIVANMFVVIHLLGSYQVY. The Cytoplasmic portion of the chain corresponds to 329-357; that stretch reads AMPVFDMIESVMIRIWHFSPTRVLRFTIR. Residues 358-378 traverse the membrane as a helical segment; sequence WTFVAATMGIAVGLPYYSALL. Serine 379 is a topological domain (extracellular). A helical transmembrane segment spans residues 380 to 400; sequence FFGGFVFAPTTYFIPCIMWLI. Topologically, residues 401 to 412 are cytoplasmic; it reads LKKPKRFSLSWC. A helical membrane pass occupies residues 413–433; sequence MNWFCIIFGLVLMIIAPIGGL. The Extracellular portion of the chain corresponds to 434 to 455; it reads AKLIYNIQKGTLPNSRCNLPKH.

The protein belongs to the amino acid/polyamine transporter 2 family. Amino acid/auxin permease (AAAP) (TC 2.A.18.2) subfamily.

The protein localises to the cell membrane. Amino acid transporter. This Arabidopsis thaliana (Mouse-ear cress) protein is Lysine histidine transporter-like 4.